A 636-amino-acid polypeptide reads, in one-letter code: Protein meg-1 (636 aa).

Composition is skewed to polar residues over residues 1 to 13 (MDNRGHFSSNGNF), 38 to 54 (SSGNMRSIGGSAQNQQQ), and 292 to 355 (LSMN…QYNH). Disordered stretches follow at residues 1–54 (MDNR…NQQQ), 289–367 (LFNL…APHL), 484–504 (SDVAREDASTSQPSKSRSMYI), and 521–542 (LDSSQSHAGPVPAASTKPKTPS). Phosphoserine; by mbk-2 is present on serine 574. Residues 591–636 (MSQSFLHQQDDEAPDCTKNVHSESDLKQAEPQESDKQSDKELPSNE) are disordered. The span at 608 to 636 (KNVHSESDLKQAEPQESDKQSDKELPSNE) shows a compositional bias: basic and acidic residues.

As to quaternary structure, interacts with pptr-1, pptr-2 and pgl-1. Post-translationally, phosphorylated by mbk-2, which promotes the disassembly of zygotic P granules in the anterior cytoplasm of pre-gastrulation embryos. Dephosphorylated by a phosphatase complex containing the PP2A regulatory subunit pptr-1, which promotes the assembly and accumulation of zygotic P granules in the posterior cytoplasm of pre-gastrulation embryos. In terms of tissue distribution, not expressed in the adult germline or in any somatic tissues.

It localises to the cytoplasmic granule. Its function is as follows. P granule component, which acts redundantly with P granule component meg-2 to promote P granule segregation during embryogenesis, and germ cell proliferation and differentiation in larval stages. In its phosphorylated form, and together with meg-2, promotes the disassembly of zygotic P granules in the anterior cytoplasm of pre-gastrulation embryos. In its dephosphorylated form, and together with meg-2, promotes the assembly and accumulation of zygotic P granules in the posterior cytoplasm of pre-gastrulation embryos. May function with the nanos family members nos-2 and nos-3 to promote germ cell proliferation during larval development. Required for fertility. This chain is Protein meg-1, found in Caenorhabditis elegans.